A 149-amino-acid chain; its full sequence is MADQLTEEQIAEFKEAFSLFDKDGDGTITTKELGTVMRSLGQNPTEAELQDMINEVDADGNGTIDFPEFLTMMARKMKDTDSEEEIREAFRVFDKDGNGFISAAELRHVMTNLGEKLTDEEVDEMVREADIDGDGQVNYEEFVEMMTSK.

At Ala-2 the chain carries N-acetylalanine. EF-hand domains follow at residues 8–43 (EQIA…LGQN), 44–79 (PTEA…KMKD), 81–116 (DSEE…LGEK), and 117–149 (LTDE…MTSK). Residues Asp-21, Asp-23, Asp-25, Thr-27, Glu-32, Asp-57, Asp-59, Asn-61, Thr-63, Glu-68, Asp-94, Asp-96, Asn-98, and Glu-105 each contribute to the Ca(2+) site. Lys-116 is subject to N6,N6,N6-trimethyllysine. Ca(2+)-binding residues include Asp-130, Asp-132, Asp-134, Gln-136, and Glu-141.

It belongs to the calmodulin family.

Functionally, calmodulin mediates the control of a large number of enzymes, ion channels and other proteins by Ca(2+). Among the enzymes to be stimulated by the calmodulin-Ca(2+) complex are a number of protein kinases and phosphatases. The sequence is that of Calmodulin-2 (CAM2) from Branchiostoma lanceolatum (Common lancelet).